Consider the following 397-residue polypeptide: 1-deoxy-D-xylulose 5-phosphate reductoisomerase (397 aa).

NADPH-binding residues include Thr-17, Gly-18, Ser-19, Ile-20, Asn-47, and Asn-130. Position 131 (Lys-131) interacts with 1-deoxy-D-xylulose 5-phosphate. Glu-132 is a binding site for NADPH. Asp-156 lines the Mn(2+) pocket. The 1-deoxy-D-xylulose 5-phosphate site is built by Ser-157, Glu-158, Ser-182, and His-205. Residue Glu-158 participates in Mn(2+) binding. Position 211 (Gly-211) interacts with NADPH. 1-deoxy-D-xylulose 5-phosphate-binding residues include Ser-218, Asn-223, Lys-224, and Glu-227. Glu-227 serves as a coordination point for Mn(2+).

It belongs to the DXR family. Mg(2+) serves as cofactor. The cofactor is Mn(2+).

The catalysed reaction is 2-C-methyl-D-erythritol 4-phosphate + NADP(+) = 1-deoxy-D-xylulose 5-phosphate + NADPH + H(+). The protein operates within isoprenoid biosynthesis; isopentenyl diphosphate biosynthesis via DXP pathway; isopentenyl diphosphate from 1-deoxy-D-xylulose 5-phosphate: step 1/6. In terms of biological role, catalyzes the NADPH-dependent rearrangement and reduction of 1-deoxy-D-xylulose-5-phosphate (DXP) to 2-C-methyl-D-erythritol 4-phosphate (MEP). The polypeptide is 1-deoxy-D-xylulose 5-phosphate reductoisomerase (Allorhizobium ampelinum (strain ATCC BAA-846 / DSM 112012 / S4) (Agrobacterium vitis (strain S4))).